A 168-amino-acid chain; its full sequence is Thioredoxin Y, chloroplastic (168 aa).

The N-terminal 58 residues, 1 to 58, are a transit peptide targeting the chloroplast; that stretch reads MAAFTSTTTAAAASPTPCRPAALVARSSAAPLRSAAPVVVAAGLRRAAAPSRRGATLR. Residues 59–165 form the Thioredoxin domain; sequence VQAKKQTFSS…LIQQIESALE (107 aa). Active-site nucleophile residues include Cys89 and Cys92. The cysteines at positions 89 and 92 are disulfide-linked.

It belongs to the thioredoxin family. Plant Y-type subfamily.

The protein resides in the plastid. It localises to the chloroplast. Its function is as follows. Probable thiol-disulfide oxidoreductase that may participate in various redox reactions. This Oryza sativa subsp. japonica (Rice) protein is Thioredoxin Y, chloroplastic.